Reading from the N-terminus, the 463-residue chain is Membrane-bound lytic murein transglycosylase F (463 aa).

The N-terminal stretch at 1-33 (MQSQDYKKRLKLQIIIILSIAVMSCGVPNVPTA) is a signal peptide. Positions 34-272 (LSSLLERESI…VLEDKYFGHI (239 aa)) are non-LT domain. The segment at 273 to 463 (RQFDYVDSRA…LVWLDEQGKI (191 aa)) is LT domain. Residue E317 is part of the active site.

It in the N-terminal section; belongs to the bacterial solute-binding protein 3 family. The protein in the C-terminal section; belongs to the transglycosylase Slt family.

The protein localises to the cell outer membrane. It catalyses the reaction Exolytic cleavage of the (1-&gt;4)-beta-glycosidic linkage between N-acetylmuramic acid (MurNAc) and N-acetylglucosamine (GlcNAc) residues in peptidoglycan, from either the reducing or the non-reducing ends of the peptidoglycan chains, with concomitant formation of a 1,6-anhydrobond in the MurNAc residue.. Murein-degrading enzyme that degrades murein glycan strands and insoluble, high-molecular weight murein sacculi, with the concomitant formation of a 1,6-anhydromuramoyl product. Lytic transglycosylases (LTs) play an integral role in the metabolism of the peptidoglycan (PG) sacculus. Their lytic action creates space within the PG sacculus to allow for its expansion as well as for the insertion of various structures such as secretion systems and flagella. The sequence is that of Membrane-bound lytic murein transglycosylase F from Alteromonas mediterranea (strain DSM 17117 / CIP 110805 / LMG 28347 / Deep ecotype).